The primary structure comprises 291 residues: Nucleotide-binding protein EUBREC_0697 (291 aa).

8-15 (GMSGAGKS) provides a ligand contact to ATP. 59–62 (DVRN) contacts GTP.

This sequence belongs to the RapZ-like family.

Displays ATPase and GTPase activities. This Agathobacter rectalis (strain ATCC 33656 / DSM 3377 / JCM 17463 / KCTC 5835 / VPI 0990) (Eubacterium rectale) protein is Nucleotide-binding protein EUBREC_0697.